The sequence spans 106 residues: Nucleoid-associated protein RPB_0667 (106 aa).

It belongs to the YbaB/EbfC family. In terms of assembly, homodimer.

It is found in the cytoplasm. The protein localises to the nucleoid. Functionally, binds to DNA and alters its conformation. May be involved in regulation of gene expression, nucleoid organization and DNA protection. The polypeptide is Nucleoid-associated protein RPB_0667 (Rhodopseudomonas palustris (strain HaA2)).